Consider the following 281-residue polypeptide: Ras-related protein Rab-40C (281 aa).

GTP is bound by residues Ser23, Gly26, Lys27, and Ser46. The interval 41 to 49 is switch-I; that stretch reads SPYAYSNGI. Mg(2+)-binding residues include Ser46 and Asp69. Residues Gly72, Asn126, and Arg127 each contribute to the GTP site. Positions 72-88 are switch-II; the sequence is GQGRFCTIFRSYSRGAQ. An SOCS box domain is found at 175–228; that stretch reads LMRHGMEKIWRPNRVFSLQDLCCRAIVSCTPVHLIDKLPLPVTIKSHLKSFSMA. Positions 245–281 are disordered; sequence SGAGGSGSKGNSLKRSKSIRPPQSPPQNCSRSNCKIS. Polar residues predominate over residues 270-281; that stretch reads PQNCSRSNCKIS. The S-palmitoyl cysteine moiety is linked to residue Cys273. Cys278 is lipidated: S-geranylgeranyl cysteine.

The protein belongs to the small GTPase superfamily. Rab family. As to quaternary structure, component of the cullin-5-RING E3 ubiquitin-protein ligase complex (ECS(RAB40C) complex) composed of CUL5, Elongin BC (ELOB and ELOC), RNF7/RBX2 and RAB40C. Interacts with protein phosphatase 6 (PP6) complex components ANKRD28, ANKRD52, PPP6C, PP6R1 and PP6R2; the interaction leads to ANKRD28 ubiquitination and decreased PP6 activity. Interacts with DAB2IP; DAB2IP acts as a GAP for RAB40C. Requires Mg(2+) as cofactor.

It localises to the cell membrane. The protein resides in the cytoplasm. The protein localises to the cytosol. Its subcellular location is the golgi apparatus membrane. The catalysed reaction is GTP + H2O = GDP + phosphate + H(+). The protein operates within protein modification; protein ubiquitination. With respect to regulation, regulated by guanine nucleotide exchange factors (GEFs) which promote the exchange of bound GDP for free GTP. Regulated by GTPase activating proteins (GAPs) including DAB2IP, which increase the GTP hydrolysis activity. Inhibited by GDP dissociation inhibitors (GDIs). Functionally, RAB40C small GTPase acts as substrate-recognition component of the ECS(RAB40C) E3 ubiquitin ligase complex which mediates the ubiquitination and subsequent proteasomal degradation of target proteins. The Rab40 subfamily belongs to the Rab family that are key regulators of intracellular membrane trafficking, from the formation of transport vesicles to their fusion with membranes. Rabs cycle between an inactive GDP-bound form and an active GTP-bound form that is able to recruit to membranes different sets of downstream effectors directly responsible for vesicle formation, movement, tethering and fusion. As part of the ECS(RAB40C) complex, mediates ANKRD28 ubiquitination and degradation, thereby inhibiting protein phosphatase 6 (PP6) complex activity and focal adhesion assembly during cell migration. Also negatively regulate lipid droplets accumulation in a GTP-dependent manner. The chain is Ras-related protein Rab-40C from Mus musculus (Mouse).